A 299-amino-acid polypeptide reads, in one-letter code: tRNA dimethylallyltransferase (299 aa).

13–20 (GPTASGKT) contacts ATP. Residue 15 to 20 (TASGKT) participates in substrate binding. Residues 38 to 41 (DSRQ) form an interaction with substrate tRNA region.

It belongs to the IPP transferase family. As to quaternary structure, monomer. It depends on Mg(2+) as a cofactor.

The enzyme catalyses adenosine(37) in tRNA + dimethylallyl diphosphate = N(6)-dimethylallyladenosine(37) in tRNA + diphosphate. Its function is as follows. Catalyzes the transfer of a dimethylallyl group onto the adenine at position 37 in tRNAs that read codons beginning with uridine, leading to the formation of N6-(dimethylallyl)adenosine (i(6)A). The protein is tRNA dimethylallyltransferase of Prochlorococcus marinus (strain MIT 9211).